Consider the following 72-residue polypeptide: Gas vesicle protein A (72 aa).

It belongs to the gas vesicle GvpA family. As to quaternary structure, the gas vesicle shell is 2 nm thick and consists of a single layer of this protein. It forms helical ribs nearly perpendicular to the long axis of the vesicle.

It localises to the gas vesicle shell. In terms of biological role, gas vesicles are hollow, gas filled proteinaceous nanostructures found in some microorganisms. During planktonic growth they allow positioning of the organism at a favorable depth for light or nutrient acquisition. GvpA forms the protein shell. The chain is Gas vesicle protein A from Planktothrix agardhii (Oscillatoria agardhii).